We begin with the raw amino-acid sequence, 101 residues long: NAD(P)H-quinone oxidoreductase subunit 4L, chloroplastic (101 aa).

Transmembrane regions (helical) follow at residues 2–22, 27–46, and 61–81; these read MLEH…YGLI, MVRA…MNLI, and IFSI…PAIV.

Belongs to the complex I subunit 4L family. NDH is composed of at least 16 different subunits, 5 of which are encoded in the nucleus.

It is found in the plastid. Its subcellular location is the chloroplast thylakoid membrane. It catalyses the reaction a plastoquinone + NADH + (n+1) H(+)(in) = a plastoquinol + NAD(+) + n H(+)(out). It carries out the reaction a plastoquinone + NADPH + (n+1) H(+)(in) = a plastoquinol + NADP(+) + n H(+)(out). Its function is as follows. NDH shuttles electrons from NAD(P)H:plastoquinone, via FMN and iron-sulfur (Fe-S) centers, to quinones in the photosynthetic chain and possibly in a chloroplast respiratory chain. The immediate electron acceptor for the enzyme in this species is believed to be plastoquinone. Couples the redox reaction to proton translocation, and thus conserves the redox energy in a proton gradient. This chain is NAD(P)H-quinone oxidoreductase subunit 4L, chloroplastic, found in Drimys granadensis.